A 149-amino-acid polypeptide reads, in one-letter code: Putative pre-16S rRNA nuclease (149 aa).

It belongs to the YqgF nuclease family.

It localises to the cytoplasm. Its function is as follows. Could be a nuclease involved in processing of the 5'-end of pre-16S rRNA. The protein is Putative pre-16S rRNA nuclease of Synechococcus elongatus (strain ATCC 33912 / PCC 7942 / FACHB-805) (Anacystis nidulans R2).